Here is a 916-residue protein sequence, read N- to C-terminus: Isoleucine--tRNA ligase (916 aa).

Positions 57 to 67 (PYANGNLHMGH) match the 'HIGH' region motif. Glu554 provides a ligand contact to L-isoleucyl-5'-AMP. The 'KMSKS' region motif lies at 595 to 599 (KMSKS). Position 598 (Lys598) interacts with ATP. Cys885, Cys888, Cys905, and Cys908 together coordinate Zn(2+).

It belongs to the class-I aminoacyl-tRNA synthetase family. IleS type 1 subfamily. As to quaternary structure, monomer. Requires Zn(2+) as cofactor.

It localises to the cytoplasm. It catalyses the reaction tRNA(Ile) + L-isoleucine + ATP = L-isoleucyl-tRNA(Ile) + AMP + diphosphate. Its function is as follows. Catalyzes the attachment of isoleucine to tRNA(Ile). As IleRS can inadvertently accommodate and process structurally similar amino acids such as valine, to avoid such errors it has two additional distinct tRNA(Ile)-dependent editing activities. One activity is designated as 'pretransfer' editing and involves the hydrolysis of activated Val-AMP. The other activity is designated 'posttransfer' editing and involves deacylation of mischarged Val-tRNA(Ile). This Staphylococcus epidermidis (strain ATCC 35984 / DSM 28319 / BCRC 17069 / CCUG 31568 / BM 3577 / RP62A) protein is Isoleucine--tRNA ligase (ileS).